The following is a 207-amino-acid chain: Outer-membrane lipoprotein LolB (207 aa).

Residues 1–23 (MPTMNRSRRLALLCLGAPLLLAA) form the signal peptide. The N-palmitoyl cysteine moiety is linked to residue Cys24. A lipid anchor (S-diacylglycerol cysteine) is attached at Cys24. Residues 171–207 (PSASQAPAPRPRRIDLEREGGPTPLAVKLVIDPEEAP) form a disordered region.

The protein belongs to the LolB family. Monomer.

The protein resides in the cell outer membrane. In terms of biological role, plays a critical role in the incorporation of lipoproteins in the outer membrane after they are released by the LolA protein. The polypeptide is Outer-membrane lipoprotein LolB (Cupriavidus pinatubonensis (strain JMP 134 / LMG 1197) (Cupriavidus necator (strain JMP 134))).